Reading from the N-terminus, the 323-residue chain is Melanocortin receptor 3 (323 aa).

Over Met1 to Gln37 the chain is Extracellular. Asn2, Asn16, and Asn28 each carry an N-linked (GlcNAc...) asparagine glycan. A helical membrane pass occupies residues Val38–Val63. The Cytoplasmic portion of the chain corresponds to Val64–Phe75. The helical transmembrane segment at Phe76 to Ile100 threads the bilayer. The Extracellular portion of the chain corresponds to Val101 to Asn118. The helical transmembrane segment at Ile119 to Val140 threads the bilayer. At Asp141–Lys160 the chain is on the cytoplasmic side. The chain crosses the membrane as a helical span at residues Ala161–Val181. Residues Tyr182–Lys186 are Extracellular-facing. Residues Met187–Met210 form a helical membrane-spanning segment. At Phe211–Thr245 the chain is on the cytoplasmic side. A helical transmembrane segment spans residues Ile246–Cys268. Topologically, residues Pro269 to Tyr277 are extracellular. The helical transmembrane segment at Thr278–Phe301 threads the bilayer. Topologically, residues Arg302–Gly323 are cytoplasmic. Cys315 carries the S-palmitoyl cysteine lipid modification.

This sequence belongs to the G-protein coupled receptor 1 family. In terms of tissue distribution, brain, placental, and gut tissues.

Its subcellular location is the cell membrane. Receptor for MSH (alpha, beta and gamma) and ACTH. This receptor is mediated by G proteins which activate adenylate cyclase. Required for expression of anticipatory patterns of activity and wakefulness during periods of limited nutrient availability and for the normal regulation of circadian clock activity in the brain. The chain is Melanocortin receptor 3 (MC3R) from Homo sapiens (Human).